The chain runs to 302 residues: MTQDPRRLLALRNQRWAKSRLFCLRSRRFSAFFWRRVWHDRLPVLAGHLAYVSLLSIVPLLAVVFSVLSWLPRFSYFRRQFELFMFSNFVPETEIAFRYHFSLFVKNASKTTSIGLLMLVLLALLLIAAIDENMNHIWRCRGQRKWLKTITMYSIVLGVVPLLVGGSLLLSSQIQGWALWHYELVSSLGGGLLELLPYLLSLGGILLLYKVVPNIYVRWQHALLGATLAALLFEVAKEGFGYYIAHFGTYKSIYGALAGIPILMIWLYMSWLVVLLGAEFTATLGEWQLNRTLRGRKPRLPG.

The next 6 membrane-spanning stretches (helical) occupy residues 51-71, 111-131, 150-170, 188-208, 222-242, and 256-276; these read YVSLLSIVPLLAVVFSVLSWL, TTSIGLLMLVLLALLLIAAID, ITMYSIVLGVVPLLVGGSLLL, LGGGLLELLPYLLSLGGILLL, ALLGATLAALLFEVAKEGFGY, and ALAGIPILMIWLYMSWLVVLL.

It belongs to the UPF0761 family.

It localises to the cell inner membrane. The polypeptide is UPF0761 membrane protein Tola_0461 (Tolumonas auensis (strain DSM 9187 / NBRC 110442 / TA 4)).